We begin with the raw amino-acid sequence, 197 residues long: NADH-quinone oxidoreductase subunit C (197 aa).

Belongs to the complex I 30 kDa subunit family. In terms of assembly, NDH-1 is composed of 14 different subunits. Subunits NuoB, C, D, E, F, and G constitute the peripheral sector of the complex.

It is found in the cell inner membrane. The catalysed reaction is a quinone + NADH + 5 H(+)(in) = a quinol + NAD(+) + 4 H(+)(out). Functionally, NDH-1 shuttles electrons from NADH, via FMN and iron-sulfur (Fe-S) centers, to quinones in the respiratory chain. The immediate electron acceptor for the enzyme in this species is believed to be ubiquinone. Couples the redox reaction to proton translocation (for every two electrons transferred, four hydrogen ions are translocated across the cytoplasmic membrane), and thus conserves the redox energy in a proton gradient. The chain is NADH-quinone oxidoreductase subunit C from Neisseria gonorrhoeae (strain ATCC 700825 / FA 1090).